The chain runs to 896 residues: Protein bride of sevenless (896 aa).

The signal sequence occupies residues 1–31; that stretch reads MKVMDALQSGRRKPLPVALLCILVTVFCVLE. Residues 32-530 are Extracellular-facing; sequence CHGADLTSPT…MFWRIKMDTW (499 aa). The disordered stretch occupies residues 38–84; it reads TSPTKKSAPLRITKPQPTSQQAKPISITTRAPTTVASTTDDEVSSSV. Polar residues predominate over residues 52-64; the sequence is PQPTSQQAKPISI. Residues 65 to 84 are compositionally biased toward low complexity; the sequence is TTRAPTTVASTTDDEVSSSV. Residues asparagine 183, asparagine 307, asparagine 474, and asparagine 485 are each glycosylated (N-linked (GlcNAc...) asparagine). A run of 7 helical transmembrane segments spans residues 531 to 554, 570 to 588, 615 to 637, 655 to 676, 693 to 712, 728 to 748, and 759 to 781; these read VATGLTAAILGLIATLAILVFIVV, ILLLLSLILVFCSFVPYSI, VFIMTLVYCFVFSLLLCRAVMLA, AVICAFSVVAQVGMSVQLLVVM, WLWGLLAYDFALLCCVGALI, IVIGSVLIMVIWVAWIALSLF, and LGLQASGWAVLVGILIPRTFLIV. Topologically, residues 782–896 are cytoplasmic; the sequence is RGIERSDIAQ…SPDHNKITRF (115 aa). 2 disordered regions span residues 825–844 and 861–896; these read SQDEVNHQSPSEIPTLPLRG and ANINPQRPPPRPQQSPSRSSVSSLPPSPDHNKITRF. The span at 874–884 shows a compositional bias: low complexity; the sequence is QSPSRSSVSSL.

This sequence belongs to the G-protein coupled receptor 3 family. In terms of tissue distribution, expressed exclusively by R8 photoreceptor cells and is internalized in a sev-dependent manner by R7 cells.

Its subcellular location is the cell membrane. Functionally, acts as a ligand for sevenless tyrosine-kinase receptor during eye development. This is Protein bride of sevenless (boss) from Drosophila melanogaster (Fruit fly).